The chain runs to 249 residues: Bax inhibitor 1 (249 aa).

6 helical membrane-spanning segments follow: residues 39–59 (LVYLTLCVALAASAVGAYLHV), 65–85 (GMLTMLGCVGSIAWLFSVPVF), 93–113 (ILLAAALLEGASVGPLIKLAV), 119–139 (ILVTAFVGTAIAFGCFTCAAI), 151–171 (GLLSSGLSILLWLQFAASIFG), and 213–233 (HALTLFTDFVAVLVRILVIML).

The protein belongs to the BI1 family. In terms of tissue distribution, ubiquitous.

It is found in the membrane. In terms of biological role, suppressor of apoptosis. In Oryza sativa subsp. japonica (Rice), this protein is Bax inhibitor 1 (BI1).